We begin with the raw amino-acid sequence, 409 residues long: MLRKEVIPMKKVVLAYSGGLDTSIIIPWLKENYGYEVIAMAADLGQGEELEPLHEKAIKSGASKLYIEDLQEEFVTDFIYPTLKAGAVYEGKYLLGTSFARPLIAQRLVEIAAKEGAVAIAHGATGKGNDQVRFELAVKALNPDLEIIAPWRIWDIKSREDAIDYAVERGIPVPVTKDRPYSMDRNVWHLSHEGGDLEDPWNEPKKDLYLLGVSPEDAPDEAEYLELDFEQGIPVSLNGEKLGPVQLLETLNEVGGKHGIGIVDMVENRLVGMKSRGVYETPGGTILYTAHQALEHLTLDRLTLHYKEQIALKYAELVYDGVWHSPLREALDAFVDVTQKNVTGTVRLKLYKGNCSLAGVKSPYSLYSEEFATFGRDGVYNQKDAEGFINLFGLPLKVRALMEKKSGLR.

ATP-binding positions include Ala-15–Ser-23 and Ala-42. L-citrulline-binding residues include Tyr-93 and Ser-98. Gly-123 is a binding site for ATP. Thr-125, Asn-129, and Asp-130 together coordinate L-aspartate. Asn-129 is a binding site for L-citrulline. L-citrulline contacts are provided by Arg-133, Ser-182, Ser-191, Glu-267, and Tyr-279.

The protein belongs to the argininosuccinate synthase family. Type 1 subfamily. Homotetramer.

It is found in the cytoplasm. It catalyses the reaction L-citrulline + L-aspartate + ATP = 2-(N(omega)-L-arginino)succinate + AMP + diphosphate + H(+). It participates in amino-acid biosynthesis; L-arginine biosynthesis; L-arginine from L-ornithine and carbamoyl phosphate: step 2/3. This chain is Argininosuccinate synthase, found in Desulfitobacterium hafniense (strain Y51).